Here is a 66-residue protein sequence, read N- to C-terminus: Large ribosomal subunit protein bL31 (66 aa).

4 residues coordinate Zn(2+): cysteine 16, cysteine 18, cysteine 36, and cysteine 39.

This sequence belongs to the bacterial ribosomal protein bL31 family. Type A subfamily. In terms of assembly, part of the 50S ribosomal subunit. Zn(2+) is required as a cofactor.

Its function is as follows. Binds the 23S rRNA. The chain is Large ribosomal subunit protein bL31 from Geobacillus sp. (strain WCH70).